A 72-amino-acid polypeptide reads, in one-letter code: MSKDDVIEMQGTVLESLPNAMFQVELESGHKILAHISGKLRMNFIRILPGDKVTVELSPYDLTRGRITWRAK.

An S1-like domain is found at 1 to 72 (MSKDDVIEMQ…TRGRITWRAK (72 aa)).

This sequence belongs to the IF-1 family. As to quaternary structure, component of the 30S ribosomal translation pre-initiation complex which assembles on the 30S ribosome in the order IF-2 and IF-3, IF-1 and N-formylmethionyl-tRNA(fMet); mRNA recruitment can occur at any time during PIC assembly.

The protein resides in the cytoplasm. In terms of biological role, one of the essential components for the initiation of protein synthesis. Stabilizes the binding of IF-2 and IF-3 on the 30S subunit to which N-formylmethionyl-tRNA(fMet) subsequently binds. Helps modulate mRNA selection, yielding the 30S pre-initiation complex (PIC). Upon addition of the 50S ribosomal subunit IF-1, IF-2 and IF-3 are released leaving the mature 70S translation initiation complex. The chain is Translation initiation factor IF-1 from Clostridium beijerinckii (strain ATCC 51743 / NCIMB 8052) (Clostridium acetobutylicum).